Consider the following 191-residue polypeptide: Protein YceI (191 aa).

An N-terminal signal peptide occupies residues 1–22 (MKKSLLGLTFASLMFSAGSAVA).

It belongs to the UPF0312 family. Type 1 subfamily.

It is found in the periplasm. This Escherichia coli O6:H1 (strain CFT073 / ATCC 700928 / UPEC) protein is Protein YceI.